Reading from the N-terminus, the 591-residue chain is Guanylate-binding protein 2 (591 aa).

The interval 1-309 is GTPase domain (Globular); the sequence is MAPEINLPGP…NAISSGDLPC (309 aa). The 242-residue stretch at 35–276 folds into the GB1/RHD3-type G domain; that stretch reads TQPVVVVAIV…FCSYILSHSN (242 aa). Residues 45–52, 181–182, and leucine 245 each bind GTP; these read GLYRTGKS and RD. Cysteine methyl ester is present on cysteine 588. Cysteine 588 carries S-geranylgeranyl cysteine lipidation. A propeptide spans 589-591 (removed in mature form); sequence NIL.

The protein belongs to the TRAFAC class dynamin-like GTPase superfamily. GB1/RHD3 GTPase family. GB1 subfamily. Homodimer; homodimerization occurs upon GTP-binding and is required for the association with membranous structures. Heterodimer with other family members, including GBP1, GBP3, GBP4 and GBP5. (Microbial infection) Ubiquitinated by S.flexneri IpaH9.8, leading to its degradation by the proteasome, thereby preventing its ability to promote host defense against bacterial infection. Post-translationally, isoprenylation is required for proper subcellular location.

It is found in the cytoplasmic vesicle membrane. The protein localises to the golgi apparatus membrane. It localises to the cytoplasm. The protein resides in the perinuclear region. The catalysed reaction is GTP + H2O = GDP + phosphate + H(+). In terms of biological role, interferon (IFN)-inducible GTPase that plays important roles in innate immunity against a diverse range of bacterial, viral and protozoan pathogens. Hydrolyzes GTP to GMP in 2 consecutive cleavage reactions, but the major reaction product is GDP. Following infection, recruited to the pathogen-containing vacuoles or vacuole-escaped bacteria and acts as a positive regulator of inflammasome assembly by promoting the release of inflammasome ligands from bacteria. Acts by promoting lysis of pathogen-containing vacuoles, releasing pathogens into the cytosol. Following pathogen release in the cytosol, promotes recruitment of proteins that mediate bacterial cytolysis: this liberates ligands that are detected by inflammasomes, such as lipopolysaccharide (LPS) that activates the non-canonical CASP4/CASP11 inflammasome or double-stranded DNA (dsDNA) that activates the AIM2 inflammasome. Confers protection to the protozoan pathogen Toxoplasma gondii. Independently of its GTPase activity, acts as an inhibitor of various viruses infectivity, such as HIV-1, Zika and influenza A viruses, by inhibiting FURIN-mediated maturation of viral envelope proteins. This chain is Guanylate-binding protein 2, found in Homo sapiens (Human).